The following is a 132-amino-acid chain: T-cell receptor alpha chain V region 2B4 (132 aa).

The first 20 residues, 1–20, serve as a signal peptide directing secretion; the sequence is MKSLSVSLVVLWLLLNWVNS. A v segment region spans residues 21 to 113; it reads QQNVQQSPES…SALYLCAVTL (93 aa). Asn-42 carries N-linked (GlcNAc...) asparagine glycosylation. Residues 114–117 form a d segment region; the sequence is YGGS. The segment at 118–132 is j segment; sequence GNKLIFGTGTLLSVK.

The sequence is that of T-cell receptor alpha chain V region 2B4 from Mus musculus (Mouse).